Reading from the N-terminus, the 322-residue chain is uncharacterized protein (322 aa).

Residues 1-27 (MKRLFWNLKHKKAWLVLLLGTGMILSS) form the signal peptide. C28 carries N-palmitoyl cysteine lipidation. C28 carries S-diacylglycerol cysteine lipidation. Residues 235–254 (DNSTNPNAPGSGQGDSTPPA) show a composition bias toward polar residues. Residues 235–298 (DNSTNPNAPG…AVQRSQKSYG (64 aa)) form a disordered region. Positions 257-267 (GEGGGSDGSSG) are enriched in gly residues. A compositionally biased stretch (polar residues) spans 274–296 (NGQNTTPTSPQSSQPAVQRSQKS).

The protein resides in the cell membrane. This is an uncharacterized protein from Mycoplasma genitalium (strain ATCC 33530 / DSM 19775 / NCTC 10195 / G37) (Mycoplasmoides genitalium).